The sequence spans 213 residues: Andrastin A biosynthesis cluster protein B (213 aa).

Part of the gene cluster that mediates the biosynthesis of andrastins, meroterpenoid compounds that exhibit inhibitory activity against ras farnesyltransferase, suggesting that they could be promising leads for antitumor agents. The first step of the pathway is the synthesis of 3,5-dimethylorsellinic acid (DMOA) by the polyketide synthase adrD via condensation of one acetyl-CoA starter unit with 3 malonyl-CoA units and 2 methylations. DMAO is then converted to farnesyl-DMAO by the prenyltransferase adrG. The methyltransferase adrK catalyzes the methylation of the carboxyl group of farnesyl-DMAO to farnesyl-DMAO methyl ester which is further converted to epoxyfarnesyl-DMAO methyl ester by the FAD-dependent monooxygenase adrH. The terpene cyclase adrI then catalyzes the carbon skeletal rearrangement to generate the andrastin E, the first compound in the pathway having the andrastin scaffold, with the tetracyclic ring system. The post-cyclization tailoring enzymes adrF, adrE, adrJ, and adrA, are involved in the conversion of andrastin E into andrastin A. The short chain dehydrogenase adrF is responsible for the oxidation of the C-3 a hydroxyl group of andrastin E to yield the corresponding ketone, andrastin D. The ketoreductase adrE stereoselectively reduces the carbonyl moiety to reverse the stereochemistry of the C-3 position to yield andrastin F. The acetyltransferase adrJ is the acetyltransferase that attaches the acetyl group to the C-3 hydroxyl group of andrastin F to yield andrastin C. Finally, the cytochrome P450 monooxygenase adrA catalyzes two sequential oxidation reactions of the C-23 methyl group, to generate the corresponding alcohol andrastin B, and aldehyde andrastin A. In Penicillium rubens (strain ATCC 28089 / DSM 1075 / NRRL 1951 / Wisconsin 54-1255) (Penicillium chrysogenum), this protein is Andrastin A biosynthesis cluster protein B.